Here is a 119-residue protein sequence, read N- to C-terminus: NAD(P)H-quinone oxidoreductase subunit M (119 aa).

It belongs to the complex I NdhM subunit family. In terms of assembly, NDH-1 can be composed of about 15 different subunits; different subcomplexes with different compositions have been identified which probably have different functions.

It is found in the cellular thylakoid membrane. The enzyme catalyses a plastoquinone + NADH + (n+1) H(+)(in) = a plastoquinol + NAD(+) + n H(+)(out). It catalyses the reaction a plastoquinone + NADPH + (n+1) H(+)(in) = a plastoquinol + NADP(+) + n H(+)(out). Its function is as follows. NDH-1 shuttles electrons from an unknown electron donor, via FMN and iron-sulfur (Fe-S) centers, to quinones in the respiratory and/or the photosynthetic chain. The immediate electron acceptor for the enzyme in this species is believed to be plastoquinone. Couples the redox reaction to proton translocation, and thus conserves the redox energy in a proton gradient. Cyanobacterial NDH-1 also plays a role in inorganic carbon-concentration. The protein is NAD(P)H-quinone oxidoreductase subunit M of Picosynechococcus sp. (strain ATCC 27264 / PCC 7002 / PR-6) (Agmenellum quadruplicatum).